The primary structure comprises 230 residues: MASADELKQAAAQAAAQKVQSGMVVGLGTGSTAAFAVGALAQRMQKEGLQFIGVPTSERTAEQARSLGIPLATLEEQPRLDLAIDGADEIEVGSLNLIKGAGGALLREKLVEASAAELIIIADASKKVAHLGTRFPVPVEVVRFGWKTTLARVEALGCQAVLRRTAEGDPYLTDEQHYILDCQFGPIANPAKLAEQLKGTVGVVEHGLFIGMATEAIIAGPEGIETLRQS.

Substrate-binding positions include 29–32 (TGST), 85–88 (DGAD), and 99–102 (KGAG). The active-site Proton acceptor is glutamate 108. Lysine 126 contributes to the substrate binding site.

The protein belongs to the ribose 5-phosphate isomerase family. As to quaternary structure, homodimer.

The enzyme catalyses aldehydo-D-ribose 5-phosphate = D-ribulose 5-phosphate. Its pathway is carbohydrate degradation; pentose phosphate pathway; D-ribose 5-phosphate from D-ribulose 5-phosphate (non-oxidative stage): step 1/1. Catalyzes the reversible conversion of ribose-5-phosphate to ribulose 5-phosphate. In Synechococcus sp. (strain JA-3-3Ab) (Cyanobacteria bacterium Yellowstone A-Prime), this protein is Ribose-5-phosphate isomerase A.